The sequence spans 1322 residues: Flocculation protein FLO9 (1322 aa).

An N-terminal signal peptide occupies residues 1–24 (MSLAHYCLLLAIVTLLGLTNVVSA). In terms of domain architecture, PA14 spans 74-249 (GGQTDISIDY…GTTVSDDFEG (176 aa)). N-linked (GlcNAc...) asparagine glycans are attached at residues asparagine 135, asparagine 187, asparagine 203, asparagine 257, asparagine 262, and asparagine 270. Residues 197–240 (NGSPPDNITGTVYMYAGFYYPMKIVYSNAVAWGTLPISVTLPDG) form a sugar recognition region. 13 tandem repeats follow at residues 278-322 (TTTE…STII), 323-367 (TTTE…TTAI), 368-412 (TTTE…TTAM), 413-457 (TTTQ…TTAM), 458-502 (TTTQ…TTAM), 503-547 (TTTQ…TTAM), 548-592 (TTTQ…TTAI), 593-637 (TTTE…TTAI), 638-682 (TTTQ…TTAM), 683-727 (TTTQ…TTAM), 728-772 (TTTQ…GLIS), 773-817 (TTTE…GLVT), and 818-862 (TTTE…ISSS). The 13 X 45 AA approximate tandem repeats, Thr-rich stretch occupies residues 278–862 (TTTEPWTGTF…KTPTTAISSS (585 aa)). An N-linked (GlcNAc...) asparagine glycan is attached at asparagine 329. Residues asparagine 419, asparagine 464, asparagine 509, asparagine 554, asparagine 599, asparagine 644, asparagine 689, and asparagine 734 are each glycosylated (N-linked (GlcNAc...) asparagine). Disordered stretches follow at residues 770–799 (LISTTTEPWTGTFTSTSTEMTTVTGTNGQP) and 816–843 (VTTTTEPWTGTFTSTSTEMTTITGTNGQ). Low complexity-rich tracts occupy residues 773 to 795 (TTTEPWTGTFTSTSTEMTTVTGT) and 817 to 840 (TTTTEPWTGTFTSTSTEMTTITGT). A glycan (N-linked (GlcNAc...) asparagine) is linked at asparagine 888. Repeat copies occupy residues 892–906 (VISSSVISSSDTSSL), 907–921 (VISSSVTSSLVTSSP), and 922–936 (VISSSFISSPVISST). Positions 892 to 936 (VISSSVISSSDTSSLVISSSVTSSLVTSSPVISSSFISSPVISST) are 3 X 15 AA approximate repeats, Ser-rich. Residues 950–1001 (SVIPTSSSTSGSSESETGSASSASSSSSISSESPKSTYSSSSLPPVTSATTS) are compositionally biased toward low complexity. The disordered stretch occupies residues 950–1018 (SVIPTSSSTS…PPVTTTKTSE (69 aa)). The segment covering 1002-1018 (QEITSSLPPVTTTKTSE) has biased composition (polar residues). 3 repeat units span residues 1013–1063 (TTKT…CPIS), 1085–1135 (TTET…CPIS), and 1136–1186 (TTES…RPQT). Residues 1013-1186 (TTKTSEQTTL…TVYSTWRPQT (174 aa)) form a 3 X 51 AA approximate repeats, Thr-rich region. Positions 1186–1196 (TTNEQSVSSKM) are enriched in polar residues. Disordered stretches follow at residues 1186–1221 (TTNEQSVSSKMNSATSETTTNTGAAETTTSTGAAET) and 1256–1284 (SETGNTKSLTSSGLSTMSQQPRSTPASSM). A compositionally biased stretch (low complexity) spans 1197–1221 (NSATSETTTNTGAAETTTSTGAAET). The span at 1257–1284 (ETGNTKSLTSSGLSTMSQQPRSTPASSM) shows a compositional bias: polar residues. Glycine 1299 is lipidated: GPI-anchor amidated glycine. A propeptide spans 1300-1322 (SANSLLAGSGLSVFIASLLLAII) (removed in mature form).

Belongs to the flocculin family. The GPI-anchor is attached to the protein in the endoplasmic reticulum and serves to target the protein to the cell surface. There, the glucosamine-inositol phospholipid moiety is cleaved off and the GPI-modified mannoprotein is covalently attached via its lipidless GPI glycan remnant to the 1,6-beta-glucan of the outer cell wall layer.

It localises to the secreted. It is found in the cell wall. Its subcellular location is the membrane. In terms of biological role, cell wall protein that participates directly in adhesive cell-cell interactions during yeast flocculation, a reversible, asexual and Ca(2+)-dependent process in which cells adhere to form aggregates (flocs) consisting of thousands of cells. The lectin-like protein sticks out of the cell wall of flocculent cells and selectively binds mannose residues in the cell walls of adjacent cells. The sequence is that of Flocculation protein FLO9 (FLO9) from Saccharomyces cerevisiae (strain ATCC 204508 / S288c) (Baker's yeast).